An 861-amino-acid polypeptide reads, in one-letter code: DNA topoisomerase 1 (861 aa).

In terms of domain architecture, Toprim spans 3–141 (KSLVIVESPA…KFSRVVFNEI (139 aa)). The Mg(2+) site is built by E9 and D110. The region spanning 157–572 (NMNRVHAQQA…DFFKKFSEQL (416 aa)) is the Topo IA-type catalytic domain. The segment at 191-196 (SAGRVQ) is interaction with DNA. The active-site O-(5'-phospho-DNA)-tyrosine intermediate is the Y318. C4-type zinc fingers lie at residues 596 to 628 (CPIC…KKRC), 658 to 685 (CDIC…NPSC), and 707 to 732 (CEKC…NKIC).

This sequence belongs to the type IA topoisomerase family. As to quaternary structure, monomer. It depends on Mg(2+) as a cofactor.

It carries out the reaction ATP-independent breakage of single-stranded DNA, followed by passage and rejoining.. In terms of biological role, releases the supercoiling and torsional tension of DNA, which is introduced during the DNA replication and transcription, by transiently cleaving and rejoining one strand of the DNA duplex. Introduces a single-strand break via transesterification at a target site in duplex DNA. The scissile phosphodiester is attacked by the catalytic tyrosine of the enzyme, resulting in the formation of a DNA-(5'-phosphotyrosyl)-enzyme intermediate and the expulsion of a 3'-OH DNA strand. The free DNA strand then undergoes passage around the unbroken strand, thus removing DNA supercoils. Finally, in the religation step, the DNA 3'-OH attacks the covalent intermediate to expel the active-site tyrosine and restore the DNA phosphodiester backbone. In Buchnera aphidicola subsp. Acyrthosiphon pisum (strain APS) (Acyrthosiphon pisum symbiotic bacterium), this protein is DNA topoisomerase 1.